Consider the following 185-residue polypeptide: Male-enhanced antigen 1 (185 aa).

2 disordered regions span residues 1-90 and 104-134; these read MGPE…VGDG and GLHL…IPMD. 2 stretches are compositionally biased toward acidic residues: residues 50-60 and 112-121; these read SSEEPEEEQEE and LESEDEDEEG. Ser114 is modified (phosphoserine).

In terms of tissue distribution, highly expressed in testis.

Its function is as follows. May play an important role in spermatogenesis and/or testis development. The protein is Male-enhanced antigen 1 (MEA1) of Homo sapiens (Human).